The sequence spans 376 residues: Chaperone protein DnaJ (376 aa).

Positions 5-70 (DYYEVLGVAK…QKRAAYDQYG (66 aa)) constitute a J domain. Residues 136–214 (GYDTQIRVPS…CHGSGKVKET (79 aa)) form a CR-type zinc finger. Residues C149, C152, C166, C169, C188, C191, C202, and C205 each coordinate Zn(2+). CXXCXGXG motif repeat units follow at residues 149-156 (CGVCHGSG), 166-173 (CPTCHGQG), 188-195 (CPKCHGTG), and 202-209 (CAHCHGSG).

This sequence belongs to the DnaJ family. As to quaternary structure, homodimer. Zn(2+) is required as a cofactor.

It localises to the cytoplasm. Its function is as follows. Participates actively in the response to hyperosmotic and heat shock by preventing the aggregation of stress-denatured proteins and by disaggregating proteins, also in an autonomous, DnaK-independent fashion. Unfolded proteins bind initially to DnaJ; upon interaction with the DnaJ-bound protein, DnaK hydrolyzes its bound ATP, resulting in the formation of a stable complex. GrpE releases ADP from DnaK; ATP binding to DnaK triggers the release of the substrate protein, thus completing the reaction cycle. Several rounds of ATP-dependent interactions between DnaJ, DnaK and GrpE are required for fully efficient folding. Also involved, together with DnaK and GrpE, in the DNA replication of plasmids through activation of initiation proteins. This is Chaperone protein DnaJ from Burkholderia mallei (strain NCTC 10229).